The primary structure comprises 341 residues: Methionine import ATP-binding protein MetN 3 (341 aa).

Positions 2-241 constitute an ABC transporter domain; the sequence is ILLENVKKIY…PQQDITKRFV (240 aa). Residue 38 to 45 coordinates ATP; the sequence is GYSGAGKS.

This sequence belongs to the ABC transporter superfamily. Methionine importer (TC 3.A.1.24) family. The complex is composed of two ATP-binding proteins (MetN), two transmembrane proteins (MetI) and a solute-binding protein (MetQ).

It is found in the cell membrane. The catalysed reaction is L-methionine(out) + ATP + H2O = L-methionine(in) + ADP + phosphate + H(+). It carries out the reaction D-methionine(out) + ATP + H2O = D-methionine(in) + ADP + phosphate + H(+). Its function is as follows. Part of the ABC transporter complex MetNIQ involved in methionine import. Responsible for energy coupling to the transport system. This is Methionine import ATP-binding protein MetN 3 from Bacillus cereus (strain ATCC 10987 / NRS 248).